The primary structure comprises 237 residues: Methylosome subunit pICln (237 aa).

Ser-2 carries the N-acetylserine modification. Phosphoserine occurs at positions 102, 144, 193, and 195. Position 223 is a phosphothreonine (Thr-223).

The protein belongs to the pICln (TC 1.A.47) family. As to quaternary structure, component of the methylosome, a 20S complex containing at least PRMT5/SKB1, WDR77/MEP50 and CLNS1A/pICln. May mediate SNRPD1 and SNRPD3 methylation. Forms a 6S pICln-Sm complex composed of CLNS1A/pICln, SNRPD1, SNRPD2, SNRPE, SNRPF and SNRPG; ring-like structure where CLNS1A/pICln mimics additional Sm proteins and which is unable to assemble into the core snRNP. Interacts with LSM10 and LSM11.

It localises to the cytoplasm. The protein localises to the cytosol. It is found in the nucleus. Its subcellular location is the cytoskeleton. Involved in both the assembly of spliceosomal snRNPs and the methylation of Sm proteins. Chaperone that regulates the assembly of spliceosomal U1, U2, U4 and U5 small nuclear ribonucleoproteins (snRNPs), the building blocks of the spliceosome, and thereby plays an important role in the splicing of cellular pre-mRNAs. Most spliceosomal snRNPs contain a common set of Sm proteins SNRPB, SNRPD1, SNRPD2, SNRPD3, SNRPE, SNRPF and SNRPG that assemble in a heptameric protein ring on the Sm site of the small nuclear RNA to form the core snRNP (Sm core). In the cytosol, the Sm proteins SNRPD1, SNRPD2, SNRPE, SNRPF and SNRPG are trapped in an inactive 6S pICln-Sm complex by the chaperone CLNS1A that controls the assembly of the core snRNP. Dissociation by the SMN complex of CLNS1A from the trapped Sm proteins and their transfer to an SMN-Sm complex triggers the assembly of core snRNPs and their transport to the nucleus. The polypeptide is Methylosome subunit pICln (CLNS1A) (Pongo abelii (Sumatran orangutan)).